The sequence spans 178 residues: Translation initiation factor IF-3 (178 aa).

Positions Met1–Asp20 are disordered.

It belongs to the IF-3 family. In terms of assembly, monomer.

It is found in the cytoplasm. Its function is as follows. IF-3 binds to the 30S ribosomal subunit and shifts the equilibrium between 70S ribosomes and their 50S and 30S subunits in favor of the free subunits, thus enhancing the availability of 30S subunits on which protein synthesis initiation begins. The protein is Translation initiation factor IF-3 of Brucella abortus biovar 1 (strain 9-941).